Here is a 381-residue protein sequence, read N- to C-terminus: Flap endonuclease 1 (381 aa).

Residues 1–105 (MGIKNLATLI…YELDKRKVRR (105 aa)) are N-domain. D34 serves as a coordination point for Mg(2+). R47 and R71 together coordinate DNA. Mg(2+) is bound by residues D87, E156, E158, D177, and D179. The tract at residues 120–251 (EIIKHERRLV…VNALKLIKEH (132 aa)) is I-domain. E156 is a binding site for DNA. G229 and D231 together coordinate DNA. D231 is a Mg(2+) binding site. The tract at residues 339–347 (VQKRLDSFF) is interaction with PCNA. Residues 360–381 (AAKKAKDAKKKAAAKGKIAKRR) are disordered. The segment covering 365–381 (KDAKKKAAAKGKIAKRR) has biased composition (basic residues).

Belongs to the XPG/RAD2 endonuclease family. FEN1 subfamily. In terms of assembly, interacts with PCNA. Three molecules of FEN1 bind to one PCNA trimer with each molecule binding to one PCNA monomer. PCNA stimulates the nuclease activity without altering cleavage specificity. Requires Mg(2+) as cofactor. Post-translationally, phosphorylated. Phosphorylation upon DNA damage induces relocalization to the nuclear plasma.

The protein resides in the nucleus. It is found in the nucleolus. Its subcellular location is the nucleoplasm. The protein localises to the mitochondrion. Functionally, structure-specific nuclease with 5'-flap endonuclease and 5'-3' exonuclease activities involved in DNA replication and repair. During DNA replication, cleaves the 5'-overhanging flap structure that is generated by displacement synthesis when DNA polymerase encounters the 5'-end of a downstream Okazaki fragment. It enters the flap from the 5'-end and then tracks to cleave the flap base, leaving a nick for ligation. Also involved in the long patch base excision repair (LP-BER) pathway, by cleaving within the apurinic/apyrimidinic (AP) site-terminated flap. Acts as a genome stabilization factor that prevents flaps from equilibrating into structures that lead to duplications and deletions. Also possesses 5'-3' exonuclease activity on nicked or gapped double-stranded DNA, and exhibits RNase H activity. Also involved in replication and repair of rDNA and in repairing mitochondrial DNA. This Kluyveromyces lactis (strain ATCC 8585 / CBS 2359 / DSM 70799 / NBRC 1267 / NRRL Y-1140 / WM37) (Yeast) protein is Flap endonuclease 1.